A 255-amino-acid chain; its full sequence is tRNA1(Val) (adenine(37)-N6)-methyltransferase (255 aa).

It belongs to the methyltransferase superfamily. tRNA (adenine-N(6)-)-methyltransferase family.

The protein localises to the cytoplasm. The catalysed reaction is adenosine(37) in tRNA1(Val) + S-adenosyl-L-methionine = N(6)-methyladenosine(37) in tRNA1(Val) + S-adenosyl-L-homocysteine + H(+). Specifically methylates the adenine in position 37 of tRNA(1)(Val) (anticodon cmo5UAC). This is tRNA1(Val) (adenine(37)-N6)-methyltransferase from Porphyromonas gingivalis (strain ATCC BAA-308 / W83).